The sequence spans 412 residues: Peptidase T (412 aa).

His-78 provides a ligand contact to Zn(2+). Asp-80 is a catalytic residue. Asp-140 contributes to the Zn(2+) binding site. Glu-173 functions as the Proton acceptor in the catalytic mechanism. Residues Glu-174, Asp-196, and His-379 each coordinate Zn(2+).

The protein belongs to the peptidase M20B family. Zn(2+) is required as a cofactor.

Its subcellular location is the cytoplasm. The enzyme catalyses Release of the N-terminal residue from a tripeptide.. Cleaves the N-terminal amino acid of tripeptides. The protein is Peptidase T of Edwardsiella ictaluri (strain 93-146).